Here is a 626-residue protein sequence, read N- to C-terminus: Chaperone protein HtpG (626 aa).

The interval 1–341 is a; substrate-binding; it reads METKQFKAES…SEDLSLNISR (341 aa). Residues 342–552 form a b region; the sequence is EMLQHDRQLK…EGEISIEMEK (211 aa). The tract at residues 553-626 is c; that stretch reads ILSAMPNNEN…FSNSICKLMI (74 aa).

It belongs to the heat shock protein 90 family. Homodimer.

The protein localises to the cytoplasm. Its function is as follows. Molecular chaperone. Has ATPase activity. This Alkaliphilus oremlandii (strain OhILAs) (Clostridium oremlandii (strain OhILAs)) protein is Chaperone protein HtpG.